We begin with the raw amino-acid sequence, 300 residues long: Cysteine-rich venom protein (300 aa).

A signal peptide spans 1 to 21; the sequence is MLSTMQTVGAVLMLSIVLVAG. Positions 22–24 are excised as a propeptide; it reads RKR. Residues 62 to 183 form the SCP domain; sequence LEMHNKIRAD…GNNKYFVCNY (122 aa).

Contains 11 disulfide bonds. In terms of tissue distribution, expressed by the venom duct.

The protein localises to the secreted. Its function is as follows. Protease responsible for cleaving the conotoxins from their propeptide precursors. The target propeptide requires minimum four residues including a leucine N-terminal of the cleavage site for efficient substrate processing (example: Xaa-Xaa-Xaa-Leu-Asn-Lys-Arg-toxin). In Conus textile (Cloth-of-gold cone), this protein is Cysteine-rich venom protein.